The sequence spans 138 residues: ATP synthase epsilon chain (138 aa).

It belongs to the ATPase epsilon chain family. F-type ATPases have 2 components, CF(1) - the catalytic core - and CF(0) - the membrane proton channel. CF(1) has five subunits: alpha(3), beta(3), gamma(1), delta(1), epsilon(1). CF(0) has three main subunits: a, b and c.

Its subcellular location is the cell inner membrane. Its function is as follows. Produces ATP from ADP in the presence of a proton gradient across the membrane. The sequence is that of ATP synthase epsilon chain from Geotalea daltonii (strain DSM 22248 / JCM 15807 / FRC-32) (Geobacter daltonii).